A 99-amino-acid chain; its full sequence is NADH-quinone oxidoreductase subunit K (99 aa).

Transmembrane regions (helical) follow at residues 3-23 (PTYYLLLSALLFSIGAVGVLV), 28-48 (IVVFMCVELMLNAVNLTLVTF), and 59-79 (VMAFFVMVVAAAEVVVGLAII).

Belongs to the complex I subunit 4L family. NDH-1 is composed of 14 different subunits. Subunits NuoA, H, J, K, L, M, N constitute the membrane sector of the complex.

The protein resides in the cell membrane. It catalyses the reaction a quinone + NADH + 5 H(+)(in) = a quinol + NAD(+) + 4 H(+)(out). Its function is as follows. NDH-1 shuttles electrons from NADH, via FMN and iron-sulfur (Fe-S) centers, to quinones in the respiratory chain. The immediate electron acceptor for the enzyme in this species is believed to be a menaquinone. Couples the redox reaction to proton translocation (for every two electrons transferred, four hydrogen ions are translocated across the cytoplasmic membrane), and thus conserves the redox energy in a proton gradient. The sequence is that of NADH-quinone oxidoreductase subunit K from Saccharopolyspora erythraea (strain ATCC 11635 / DSM 40517 / JCM 4748 / NBRC 13426 / NCIMB 8594 / NRRL 2338).